The chain runs to 241 residues: Small ribosomal subunit protein uS2 (241 aa).

It belongs to the universal ribosomal protein uS2 family.

The protein is Small ribosomal subunit protein uS2 of Buchnera aphidicola subsp. Cinara cedri (strain Cc).